The following is a 412-amino-acid chain: Subtilisin-like protease 6 (412 aa).

Residues 1–20 (MGFITKAIPIVLAALSTVNG) form the signal peptide. Residues 21 to 127 (ARILEAGPHA…VRATTNGTNL (107 aa)) constitute a propeptide that is removed on maturation. One can recognise an Inhibitor I9 domain in the interval 36–120 (KYIVVMKKDV…FIEPDFVVRA (85 aa)). A Peptidase S8 domain is found at 135–412 (SWGLARVSTR…SKLIYNGSGK (278 aa)). Residues aspartate 167 and histidine 198 each act as charge relay system in the active site. N-linked (GlcNAc...) asparagine glycosylation is found at asparagine 252, asparagine 264, and asparagine 325. Catalysis depends on serine 358, which acts as the Charge relay system. Asparagine 408 carries N-linked (GlcNAc...) asparagine glycosylation.

Belongs to the peptidase S8 family.

The protein resides in the secreted. In terms of biological role, secreted subtilisin-like serine protease with keratinolytic activity that contributes to pathogenicity. The polypeptide is Subtilisin-like protease 6 (SUB6) (Trichophyton verrucosum (strain HKI 0517)).